Reading from the N-terminus, the 477-residue chain is Cytochrome P450 716A1 (477 aa).

Residues 2-22 (YMAIMIILFLSSILLSLLLLL) form a helical membrane-spanning segment. Heme is bound at residue C424.

The protein belongs to the cytochrome P450 family. Heme is required as a cofactor.

The protein localises to the membrane. Possesses triterpene oxidizing activity. Catalyzes the C28 hydroxylation of alpha-amyrin, beta-amyrin, and lupeol, producing uvaol, erythrodiol, and betulin, respectively. Catalyzes the C28 carboxylation of alpha- and beta-amyrin. The protein is Cytochrome P450 716A1 of Arabidopsis thaliana (Mouse-ear cress).